The chain runs to 660 residues: DNA mismatch repair protein MutL (660 aa).

It belongs to the DNA mismatch repair MutL/HexB family.

Functionally, this protein is involved in the repair of mismatches in DNA. It is required for dam-dependent methyl-directed DNA mismatch repair. May act as a 'molecular matchmaker', a protein that promotes the formation of a stable complex between two or more DNA-binding proteins in an ATP-dependent manner without itself being part of a final effector complex. This chain is DNA mismatch repair protein MutL, found in Streptococcus pyogenes serotype M3 (strain ATCC BAA-595 / MGAS315).